Here is a 253-residue protein sequence, read N- to C-terminus: 7-carboxy-7-deazaguanine synthase (253 aa).

Residues 12–14 (WQG) and arginine 32 each bind substrate. The Radical SAM core domain maps to 23-253 (AFGRRQIFVR…FQVHKYLNVL (231 aa)). 3 residues coordinate [4Fe-4S] cluster: cysteine 36, cysteine 40, and cysteine 43. Position 45 (serine 45) interacts with Mg(2+). A substrate-binding site is contributed by threonine 98. Glycine 100 contributes to the S-adenosyl-L-methionine binding site.

This sequence belongs to the radical SAM superfamily. 7-carboxy-7-deazaguanine synthase family. As to quaternary structure, homodimer. Requires [4Fe-4S] cluster as cofactor. It depends on S-adenosyl-L-methionine as a cofactor. The cofactor is Mg(2+).

It catalyses the reaction 6-carboxy-5,6,7,8-tetrahydropterin + H(+) = 7-carboxy-7-deazaguanine + NH4(+). It participates in purine metabolism; 7-cyano-7-deazaguanine biosynthesis. In terms of biological role, catalyzes the complex heterocyclic radical-mediated conversion of 6-carboxy-5,6,7,8-tetrahydropterin (CPH4) to 7-carboxy-7-deazaguanine (CDG), a step common to the biosynthetic pathways of all 7-deazapurine-containing compounds. This Thermococcus kodakarensis (strain ATCC BAA-918 / JCM 12380 / KOD1) (Pyrococcus kodakaraensis (strain KOD1)) protein is 7-carboxy-7-deazaguanine synthase.